The primary structure comprises 221 residues: NEDD4 family-interacting protein 1 (221 aa).

At Ala2 the chain carries N-acetylalanine. Positions Ala2–Pro41 are interaction with UBE2L3. Over Ala2–Gly116 the chain is Cytoplasmic. The segment at Arg18 to Ile45 is disordered. 3 consecutive short sequence motifs (PPxY motif) follow at residues Pro39 to Tyr42, Pro64 to Tyr67, and Pro74 to Tyr76. The interval Tyr42 to Tyr76 is interaction with ITCH. A helical transmembrane segment spans residues Ile117–Phe137. The Extracellular segment spans residues Cys138–Ala143. A helical membrane pass occupies residues Ala144–Val164. Residues Arg165–Gly172 lie on the Cytoplasmic side of the membrane. The chain crosses the membrane as a helical span at residues Tyr173–Leu193. Over Arg194–Tyr221 the chain is Extracellular.

As to quaternary structure, forms heterodimers with NDFIP2. Interacts with several E3 ubiquitin-protein ligases, including ITCH, NEDD4, NEDD4L and WWP2. The interaction with NEDD4, NEDD4L and ITCH leads to relocalization of these proteins to exosomes and eventually to exosomal secretion. Interacts with U2SURP. Interacts with SLC11A2/DMT1. Interacts with PTEN. May interact with phosphorylated EGFR. Interacts with BRAT1. Interacts with KCNH2. Interacts with MAVS. Part of a complex containing ITCH, NDFIP1 and MAP3K7. Interacts (via N-terminus) with UBE2L3; the interaction mediates recruitment of UBE2L3 to ITCH. Ubiquitinated by NEDD4 and ITCH; mono-, di- and polyubiquitinated forms are detected. Ubiquitination regulates its degradation. In terms of processing, undergoes transient tyrosine phosphorylation following EGF stimulation, most probably by catalyzed by SRC. Phosphorylation SRC is enhanced in the presence of NDFIP2 which may act as a scaffold to recruit SRC to NDFIP1. Widely expressed. Higher levels are detected in cerebellum, pituitary, thalamus, kidney, liver, testis, salivary glands and placenta. Also expressed in fetal brain, kidney and lung.

It is found in the endosome membrane. Its subcellular location is the golgi apparatus membrane. The protein localises to the synapse. The protein resides in the synaptosome. It localises to the cell projection. It is found in the dendrite. Its subcellular location is the secreted. Its function is as follows. Activates HECT domain-containing E3 ubiquitin-protein ligases, including NEDD4 and ITCH, and consequently modulates the stability of their targets. As a result, controls many cellular processes. Prevents chronic T-helper cell-mediated inflammation by activating ITCH and thus controlling JUNB degradation. Promotes pancreatic beta cell death through degradation of JUNB and inhibition of the unfolded protein response, leading to reduction of insulin secretion. Restricts the production of pro-inflammatory cytokines in effector Th17 T-cells by promoting ITCH-mediated ubiquitination and degradation of RORC. Together with NDFIP2, limits the cytokine signaling and expansion of effector Th2 T-cells by promoting degradation of JAK1, probably by ITCH- and NEDD4L-mediated ubiquitination. Regulates peripheral T-cell tolerance to self and foreign antigens, forcing the exit of naive CD4+ T-cells from the cell cycle before they become effector T-cells. Negatively regulates RLR-mediated antiviral response by promoting SMURF1-mediated ubiquitination and subsequent degradation of MAVS. Negatively regulates KCNH2 potassium channel activity by decreasing its cell-surface expression and interfering with channel maturation through recruitment of NEDD4L to the Golgi apparatus where it mediates KCNH2 degradation. In cortical neurons, mediates the ubiquitination of the divalent metal transporter SLC11A2/DMT1 by NEDD4L, leading to its down-regulation and protection of the cells from cobalt and iron toxicity. Important for normal development of dendrites and dendritic spines in cortex. Enhances the ubiquitination of BRAT1 mediated by: NEDD4, NEDD4L and ITCH and is required for the nuclear localization of ubiquitinated BRAT1. Enhances the ITCH-mediated ubiquitination of MAP3K7 by recruiting E2 ubiquitin-conjugating enzyme UBE2L3 to ITCH. Modulates EGFR signaling through multiple pathways. In particular, may regulate the ratio of AKT1-to-MAPK8 signaling in response to EGF, acting on AKT1 probably through PTEN destabilization and on MAPK8 through ITCH-dependent MAP2K4 inactivation. As a result, may control cell growth rate. Inhibits cell proliferation by promoting PTEN nuclear localization and changing its signaling specificity. In Homo sapiens (Human), this protein is NEDD4 family-interacting protein 1 (NDFIP1).